The following is a 486-amino-acid chain: N-succinylglutamate 5-semialdehyde dehydrogenase (486 aa).

220-225 is an NAD(+) binding site; sequence GSSRTG. Residues Glu-243 and Cys-277 contribute to the active site.

The protein belongs to the aldehyde dehydrogenase family. AstD subfamily.

It catalyses the reaction N-succinyl-L-glutamate 5-semialdehyde + NAD(+) + H2O = N-succinyl-L-glutamate + NADH + 2 H(+). The protein operates within amino-acid degradation; L-arginine degradation via AST pathway; L-glutamate and succinate from L-arginine: step 4/5. Catalyzes the NAD-dependent reduction of succinylglutamate semialdehyde into succinylglutamate. This chain is N-succinylglutamate 5-semialdehyde dehydrogenase, found in Shewanella frigidimarina (strain NCIMB 400).